The chain runs to 227 residues: Cell wall mannoprotein CIS3 (227 aa).

The first 21 residues, 1-21 (MQFKNVALAASVAALSATASA), serve as a signal peptide directing secretion. A propeptide spanning residues 22–64 (EGYTPGEPWSTLTPTGSISCGAAEYTTTFGIAVQAITSSKAKR) is cleaved from the precursor. A PIR1/2/3 repeat occupies 65 to 78 (DVISQIGDGQVQAT). An O-linked (Man) serine glycan is attached at serine 68. Residue threonine 78 is glycosylated (O-linked (Man) threonine). The span at 83-124 (AQATDSQAQATTTATPTSSEKISSSASKTSTNATSSSCATPS) shows a compositional bias: low complexity. Residues 83–127 (AQATDSQAQATTTATPTSSEKISSSASKTSTNATSSSCATPSLKD) are disordered. Residues serine 105, serine 106, serine 107, and serine 109 are each glycosylated (O-linked (Man) serine). O-linked (Man) threonine glycosylation occurs at threonine 111. A glycan (O-linked (Man) serine) is linked at serine 112. Threonine 113 carries an O-linked (Man) threonine glycan. The N-linked (GlcNAc...) asparagine glycan is linked to asparagine 114. Threonine 116 carries O-linked (Man) threonine glycosylation. Serine 117 and serine 118 each carry an O-linked (Man) serine glycan.

This sequence belongs to the PIR protein family. Covalently linked to beta-1,3-glucan of the inner cell wall layer via an alkali-sensitive ester linkage between the gamma-carboxyl group of glutamic acid, arising from Gln-74 within the PIR1/2/3 repeat, and hydroxyl groups of glucoses of beta-1,3-glucan chains. Post-translationally, extensively O-mannosylated. Also N-glycosylated.

Its subcellular location is the secreted. It localises to the cell wall. Its function is as follows. Component of the outer cell wall layer. Required for stability of the cell wall and for optimal growth. Required for resistance against several antifungal and cell wall-perturbing agents. This chain is Cell wall mannoprotein CIS3 (CIS3), found in Saccharomyces cerevisiae (strain ATCC 204508 / S288c) (Baker's yeast).